A 97-amino-acid chain; its full sequence is Ferredoxin-3 (97 aa).

2 4Fe-4S ferredoxin-type domains span residues 18–47 (FAES…LKAL) and 65–95 (KVMV…HNPL). Positions 27, 30, 33, 37, 75, 78, 81, and 85 each coordinate [4Fe-4S] cluster.

Homodimer. Requires [4Fe-4S] cluster as cofactor.

In terms of biological role, ferredoxins are iron-sulfur proteins that transfer electrons in a wide variety of metabolic reactions. In Nostoc sp. (strain PCC 7120 / SAG 25.82 / UTEX 2576), this protein is Ferredoxin-3 (fdxB).